A 240-amino-acid polypeptide reads, in one-letter code: MATLFIADLHLQTEEPAIVAGFLRFLAVEARQADALYILGDLFEAWIGDDDPNPLHREMAVAIKSLVDSGVPCFFIHGNRDFLIGKRFARESGMTLLPQEKVLDLYGRNVLIMHGDTLCTDDAGYQAFRAKVHNPWVQRPFLTLPLFIRRRIAARMRAGSKAANSSKSLDIMDVNAQTVVAEMEKHRVQWLIHGHTHRPAVHELSANGQPAFRVVLGAWHHEGSMVKVTPDNVELIAFPL.

Mn(2+) contacts are provided by Asp-8, His-10, Asp-41, Asn-79, and His-114. 79 to 80 (NR) lines the substrate pocket. Positions 122, 160, 164, 167, and 195 each coordinate substrate. Mn(2+)-binding residues include His-195 and His-197.

Belongs to the LpxH family. Mn(2+) serves as cofactor.

It is found in the cell inner membrane. It catalyses the reaction UDP-2-N,3-O-bis[(3R)-3-hydroxytetradecanoyl]-alpha-D-glucosamine + H2O = 2-N,3-O-bis[(3R)-3-hydroxytetradecanoyl]-alpha-D-glucosaminyl 1-phosphate + UMP + 2 H(+). Its pathway is glycolipid biosynthesis; lipid IV(A) biosynthesis; lipid IV(A) from (3R)-3-hydroxytetradecanoyl-[acyl-carrier-protein] and UDP-N-acetyl-alpha-D-glucosamine: step 4/6. Its function is as follows. Hydrolyzes the pyrophosphate bond of UDP-2,3-diacylglucosamine to yield 2,3-diacylglucosamine 1-phosphate (lipid X) and UMP by catalyzing the attack of water at the alpha-P atom. Involved in the biosynthesis of lipid A, a phosphorylated glycolipid that anchors the lipopolysaccharide to the outer membrane of the cell. This is UDP-2,3-diacylglucosamine hydrolase from Salmonella typhi.